We begin with the raw amino-acid sequence, 156 residues long: Small ribosomal subunit protein uS7 (156 aa).

The protein belongs to the universal ribosomal protein uS7 family. As to quaternary structure, part of the 30S ribosomal subunit. Contacts proteins S9 and S11.

Its function is as follows. One of the primary rRNA binding proteins, it binds directly to 16S rRNA where it nucleates assembly of the head domain of the 30S subunit. Is located at the subunit interface close to the decoding center, probably blocks exit of the E-site tRNA. The sequence is that of Small ribosomal subunit protein uS7 from Staphylococcus saprophyticus subsp. saprophyticus (strain ATCC 15305 / DSM 20229 / NCIMB 8711 / NCTC 7292 / S-41).